The following is a 109-amino-acid chain: MKGLPPSLRSRKRYIAFRIIAEKKIDERSLSRALSEKMLSLFGECFAASGLRLEAFDGERGIVRCYREALDKVMVALTLMTHVGGVRVIPLTLGVSGTIKRCKRKYLEV.

It belongs to the eukaryotic/archaeal RNase P protein component 2 family. As to quaternary structure, consists of a catalytic RNA component and at least 4-5 protein subunits.

The protein resides in the cytoplasm. The catalysed reaction is Endonucleolytic cleavage of RNA, removing 5'-extranucleotides from tRNA precursor.. Its function is as follows. Part of ribonuclease P, a protein complex that generates mature tRNA molecules by cleaving their 5'-ends. This chain is Ribonuclease P protein component 2, found in Archaeoglobus fulgidus (strain ATCC 49558 / DSM 4304 / JCM 9628 / NBRC 100126 / VC-16).